Consider the following 327-residue polypeptide: Glycerol-3-phosphate dehydrogenase [NAD(P)+] (327 aa).

Residues Phe-13, Arg-34, and Lys-107 each contribute to the NADPH site. Sn-glycerol 3-phosphate contacts are provided by Lys-107 and Gly-135. Ala-139 contributes to the NADPH binding site. Sn-glycerol 3-phosphate-binding residues include Lys-190, Asp-243, Ser-253, Arg-254, and Asn-255. Lys-190 acts as the Proton acceptor in catalysis. NADPH is bound at residue Arg-254. NADPH is bound by residues Val-276 and Glu-277.

It belongs to the NAD-dependent glycerol-3-phosphate dehydrogenase family.

Its subcellular location is the cytoplasm. The catalysed reaction is sn-glycerol 3-phosphate + NAD(+) = dihydroxyacetone phosphate + NADH + H(+). It carries out the reaction sn-glycerol 3-phosphate + NADP(+) = dihydroxyacetone phosphate + NADPH + H(+). Its pathway is membrane lipid metabolism; glycerophospholipid metabolism. Catalyzes the reduction of the glycolytic intermediate dihydroxyacetone phosphate (DHAP) to sn-glycerol 3-phosphate (G3P), the key precursor for phospholipid synthesis. This Rhizobium etli (strain CIAT 652) protein is Glycerol-3-phosphate dehydrogenase [NAD(P)+].